A 532-amino-acid chain; its full sequence is Light-independent protochlorophyllide reductase subunit B (532 aa).

[4Fe-4S] cluster is bound at residue Asp36. The active-site Proton donor is Asp292. 428-429 (GL) is a substrate binding site. A disordered region spans residues 445–486 (EEEEPESISNGHAAAAGSEGGVPDSGEAGDAGDTDGMPWSPD).

This sequence belongs to the ChlB/BchB/BchZ family. As to quaternary structure, protochlorophyllide reductase is composed of three subunits; BchL, BchN and BchB. Forms a heterotetramer of two BchB and two BchN subunits. It depends on [4Fe-4S] cluster as a cofactor.

The enzyme catalyses chlorophyllide a + oxidized 2[4Fe-4S]-[ferredoxin] + 2 ADP + 2 phosphate = protochlorophyllide a + reduced 2[4Fe-4S]-[ferredoxin] + 2 ATP + 2 H2O. It participates in porphyrin-containing compound metabolism; bacteriochlorophyll biosynthesis (light-independent). Its function is as follows. Component of the dark-operative protochlorophyllide reductase (DPOR) that uses Mg-ATP and reduced ferredoxin to reduce ring D of protochlorophyllide (Pchlide) to form chlorophyllide a (Chlide). This reaction is light-independent. The NB-protein (BchN-BchB) is the catalytic component of the complex. The protein is Light-independent protochlorophyllide reductase subunit B of Chlorobium phaeobacteroides (strain BS1).